A 361-amino-acid chain; its full sequence is Spermatogenesis-associated protein 17 (361 aa).

IQ domains lie at 32–61 (ENDAAVKIQSWFRGCQVRAYIRHLNRIVTI), 55–84 (LNRIVTIIQKWWRSFLGRKQYQLTVQVAYY), and 91–120 (YNAMAVRIQRRWRGYRVRKYLFNYYYLKEY).

The protein resides in the cytoplasm. The chain is Spermatogenesis-associated protein 17 (SPATA17) from Homo sapiens (Human).